An 873-amino-acid chain; its full sequence is Alanine--tRNA ligase (873 aa).

Zn(2+)-binding residues include histidine 559, histidine 563, cysteine 661, and histidine 665.

The protein belongs to the class-II aminoacyl-tRNA synthetase family. In terms of assembly, homotetramer. Zn(2+) is required as a cofactor.

It is found in the cytoplasm. It catalyses the reaction tRNA(Ala) + L-alanine + ATP = L-alanyl-tRNA(Ala) + AMP + diphosphate. Functionally, catalyzes the attachment of alanine to tRNA(Ala) in a two-step reaction: alanine is first activated by ATP to form Ala-AMP and then transferred to the acceptor end of tRNA(Ala). Also edits incorrectly charged Ser-tRNA(Ala) and Gly-tRNA(Ala) via its editing domain. The sequence is that of Alanine--tRNA ligase from Wigglesworthia glossinidia brevipalpis.